Here is a 737-residue protein sequence, read N- to C-terminus: O-GlcNAcase BT_4395 (737 aa).

Residues 1–21 (MKNNKIYLLGACLLCAVTTFA) form the signal peptide. A catalytic domain region spans residues 148-433 (VRYRGVVEGF…WKDAIRTILP (286 aa)). A GH84 domain is found at 149 to 416 (RYRGVVEGFY…SVASYAWNPA (268 aa)). The a protein site is built by Gly-156, Lys-187, and Asp-263. Asp-264 acts as the Proton donor in catalysis. A protein is bound by residues Tyr-303, 358–360 (WWN), Asp-365, and Asn-393.

The protein belongs to the glycosyl hydrolase 84 family. In terms of assembly, homodimer.

It carries out the reaction 3-O-(N-acetyl-beta-D-glucosaminyl)-L-seryl-[protein] + H2O = N-acetyl-D-glucosamine + L-seryl-[protein]. The enzyme catalyses 3-O-(N-acetyl-beta-D-glucosaminyl)-L-threonyl-[protein] + H2O = L-threonyl-[protein] + N-acetyl-D-glucosamine. Inhibited by 1,2-dideoxy-2'-methyl-alpha-D-glucopyranoso-[2,1-d]-delta 2'-thiazoline (NAG-thiazoline) and O-(2-acetamido-2-deoxy-D-glucopyranosylidene)amino-N-phenyl-carbamate (PUGNAc). Not inhibited by Streptozotocin. In terms of biological role, can hydrolyze the glycosidic link of O-GlcNAcylated proteins. Can use p-nitrophenyl-beta-GlcNAc and 4-methylumbelliferone-GlcNAc as substrates (in vitro). The protein is O-GlcNAcase BT_4395 of Bacteroides thetaiotaomicron (strain ATCC 29148 / DSM 2079 / JCM 5827 / CCUG 10774 / NCTC 10582 / VPI-5482 / E50).